The following is a 52-amino-acid chain: Ribosome modulation factor (52 aa).

This sequence belongs to the ribosome modulation factor family.

It is found in the cytoplasm. Functionally, during stationary phase, converts 70S ribosomes to an inactive dimeric form (100S ribosomes). This chain is Ribosome modulation factor, found in Xenorhabdus nematophila (strain ATCC 19061 / DSM 3370 / CCUG 14189 / LMG 1036 / NCIMB 9965 / AN6).